The primary structure comprises 524 residues: GMP synthase [glutamine-hydrolyzing] (524 aa).

In terms of domain architecture, Glutamine amidotransferase type-1 spans 8–206 (RILILDFGSQ…IYDICGCEAL (199 aa)). C85 functions as the Nucleophile in the catalytic mechanism. Residues H180 and E182 contribute to the active site. The 193-residue stretch at 207–399 (WEPRHIIAKS…LGLPFELVYR (193 aa)) folds into the GMPS ATP-PPase domain. An ATP-binding site is contributed by 234–240 (SGGVDSS).

In terms of assembly, homodimer.

It carries out the reaction XMP + L-glutamine + ATP + H2O = GMP + L-glutamate + AMP + diphosphate + 2 H(+). Its pathway is purine metabolism; GMP biosynthesis; GMP from XMP (L-Gln route): step 1/1. Functionally, catalyzes the synthesis of GMP from XMP. This Nitrosococcus oceani (strain ATCC 19707 / BCRC 17464 / JCM 30415 / NCIMB 11848 / C-107) protein is GMP synthase [glutamine-hydrolyzing].